A 246-amino-acid polypeptide reads, in one-letter code: Uridylate kinase (246 aa).

20-23 contacts ATP; it reads KISG. Residues 28 to 33 form an involved in allosteric activation by GTP region; that stretch reads GDQGYG. Gly62 provides a ligand contact to UMP. ATP is bound by residues Gly63 and Arg67. UMP-binding positions include Asp82 and 143 to 150; that span reads TGNPYFTT. 3 residues coordinate ATP: Thr170, Tyr176, and Asp179.

Belongs to the UMP kinase family. As to quaternary structure, homohexamer.

The protein resides in the cytoplasm. The enzyme catalyses UMP + ATP = UDP + ADP. The protein operates within pyrimidine metabolism; CTP biosynthesis via de novo pathway; UDP from UMP (UMPK route): step 1/1. Its activity is regulated as follows. Allosterically activated by GTP. Inhibited by UTP. Its function is as follows. Catalyzes the reversible phosphorylation of UMP to UDP. The protein is Uridylate kinase of Cereibacter sphaeroides (strain ATCC 17023 / DSM 158 / JCM 6121 / CCUG 31486 / LMG 2827 / NBRC 12203 / NCIMB 8253 / ATH 2.4.1.) (Rhodobacter sphaeroides).